The following is a 354-amino-acid chain: Uroporphyrinogen decarboxylase (354 aa).

Substrate is bound by residues 25-29 (RQAGR), aspartate 75, tyrosine 152, threonine 207, and histidine 330.

This sequence belongs to the uroporphyrinogen decarboxylase family. In terms of assembly, homodimer.

Its subcellular location is the cytoplasm. It carries out the reaction uroporphyrinogen III + 4 H(+) = coproporphyrinogen III + 4 CO2. The protein operates within porphyrin-containing compound metabolism; protoporphyrin-IX biosynthesis; coproporphyrinogen-III from 5-aminolevulinate: step 4/4. Functionally, catalyzes the decarboxylation of four acetate groups of uroporphyrinogen-III to yield coproporphyrinogen-III. The sequence is that of Uroporphyrinogen decarboxylase from Xanthomonas campestris pv. campestris (strain 8004).